We begin with the raw amino-acid sequence, 859 residues long: Leucine--tRNA ligase (859 aa).

Positions 42–52 match the 'HIGH' region motif; that stretch reads PYPSGRLHMGH. The 'KMSKS' region signature appears at 618–622; that stretch reads KMSKS. Position 621 (Lys621) interacts with ATP.

Belongs to the class-I aminoacyl-tRNA synthetase family.

The protein resides in the cytoplasm. It carries out the reaction tRNA(Leu) + L-leucine + ATP = L-leucyl-tRNA(Leu) + AMP + diphosphate. The chain is Leucine--tRNA ligase from Shewanella pealeana (strain ATCC 700345 / ANG-SQ1).